We begin with the raw amino-acid sequence, 267 residues long: Orotidine 5'-phosphate decarboxylase (267 aa).

K93 serves as the catalytic Proton donor.

It belongs to the OMP decarboxylase family. Type 2 subfamily.

It carries out the reaction orotidine 5'-phosphate + H(+) = UMP + CO2. Its pathway is pyrimidine metabolism; UMP biosynthesis via de novo pathway; UMP from orotate: step 2/2. This Herpetosiphon aurantiacus (strain ATCC 23779 / DSM 785 / 114-95) protein is Orotidine 5'-phosphate decarboxylase.